Here is a 488-residue protein sequence, read N- to C-terminus: Ribulose bisphosphate carboxylase large chain (488 aa).

2 residues coordinate substrate: Asn127 and Thr177. Catalysis depends on Lys179, which acts as the Proton acceptor. A substrate-binding site is contributed by Lys181. Mg(2+)-binding residues include Lys205, Asp207, and Glu208. At Lys205 the chain carries N6-carboxylysine. Catalysis depends on His297, which acts as the Proton acceptor. The substrate site is built by Arg298, His330, and Ser382.

Belongs to the RuBisCO large chain family. Type I subfamily. In terms of assembly, heterohexadecamer of 8 large chains and 8 small chains. Mg(2+) is required as a cofactor.

It is found in the plastid. The protein resides in the chloroplast. The enzyme catalyses 2 (2R)-3-phosphoglycerate + 2 H(+) = D-ribulose 1,5-bisphosphate + CO2 + H2O. It carries out the reaction D-ribulose 1,5-bisphosphate + O2 = 2-phosphoglycolate + (2R)-3-phosphoglycerate + 2 H(+). RuBisCO catalyzes two reactions: the carboxylation of D-ribulose 1,5-bisphosphate, the primary event in carbon dioxide fixation, as well as the oxidative fragmentation of the pentose substrate in the photorespiration process. Both reactions occur simultaneously and in competition at the same active site. The protein is Ribulose bisphosphate carboxylase large chain of Porphyra purpurea (Red seaweed).